A 274-amino-acid chain; its full sequence is Putative phosphoenolpyruvate synthase regulatory protein (274 aa).

Residue 154 to 161 (AVSRSGKT) coordinates ADP.

This sequence belongs to the pyruvate, phosphate/water dikinase regulatory protein family. PSRP subfamily.

It catalyses the reaction [pyruvate, water dikinase] + ADP = [pyruvate, water dikinase]-phosphate + AMP + H(+). The enzyme catalyses [pyruvate, water dikinase]-phosphate + phosphate + H(+) = [pyruvate, water dikinase] + diphosphate. Functionally, bifunctional serine/threonine kinase and phosphorylase involved in the regulation of the phosphoenolpyruvate synthase (PEPS) by catalyzing its phosphorylation/dephosphorylation. The chain is Putative phosphoenolpyruvate synthase regulatory protein from Alkalilimnicola ehrlichii (strain ATCC BAA-1101 / DSM 17681 / MLHE-1).